Consider the following 184-residue polypeptide: Probable chemoreceptor glutamine deamidase CheD (184 aa).

The protein belongs to the CheD family.

It carries out the reaction L-glutaminyl-[protein] + H2O = L-glutamyl-[protein] + NH4(+). Its function is as follows. Probably deamidates glutamine residues to glutamate on methyl-accepting chemotaxis receptors (MCPs), playing an important role in chemotaxis. In Rhizobium rhizogenes (strain K84 / ATCC BAA-868) (Agrobacterium radiobacter), this protein is Probable chemoreceptor glutamine deamidase CheD.